The sequence spans 319 residues: MKKSLTSLDLNLLLCLQLLMQERSVTKAAKRMNVTPSAVSKSLAKLRAWFDDPLFVNTPLGLAPTPLMVSMEQSLADWMQMGNQLLDKPHHQTPRGLKFELAAESPLMMIMFNSLSQQIYQRYPQATIKVRNWDYDSLEAITRGKVDIGFTGRESHPRSRELISLLPLAIDFEVLFSDLPWVWLQEDHPALREAWDLDTFLRYPHISICWEQSDTWALDDVLQEMGRKRHIALSLPGFEQSLFMAAQPGHTLIATAPRYCQHYNQLHQLPLVARPLPFDAQQREKLMVPFTLLWHKRNSHNPKIVWLRQAINTLCRRLI.

The region spanning 8-65 is the HTH lysR-type domain; sequence LDLNLLLCLQLLMQERSVTKAAKRMNVTPSAVSKSLAKLRAWFDDPLFVNTPLGLAPT. A DNA-binding region (H-T-H motif) is located at residues 25–44; the sequence is VTKAAKRMNVTPSAVSKSLA.

This sequence belongs to the LysR transcriptional regulatory family.

Functionally, involved in anaerobic NO protection. The polypeptide is HTH-type transcriptional regulator YidZ (Salmonella typhi).